A 1085-amino-acid polypeptide reads, in one-letter code: Protein CROWDED NUCLEI 3 (1085 aa).

Coiled-coil stretches lie at residues aspartate 51–lysine 149 and arginine 185–leucine 695. Lysine 318 participates in a covalent cross-link: Glycyl lysine isopeptide (Lys-Gly) (interchain with G-Cter in ubiquitin). A Nuclear localization signal motif is present at residues alanine 404–glutamate 411. A Glycyl lysine isopeptide (Lys-Gly) (interchain with G-Cter in ubiquitin) cross-link involves residue lysine 661. Phosphoserine occurs at positions 764, 787, 825, and 843. Disordered stretches follow at residues threonine 801–glutamate 997 and asparagine 1020–lysine 1077. Residues serine 813–serine 825 show a composition bias toward basic and acidic residues. Over residues arginine 854–arginine 868 the composition is skewed to basic residues. The span at valine 877 to threonine 897 shows a compositional bias: basic and acidic residues. At serine 910 the chain carries Phosphoserine. Residues valine 932–tyrosine 941 show a composition bias toward polar residues. The span at valine 949–lysine 995 shows a compositional bias: basic and acidic residues. Positions glutamate 1045–threonine 1066 are enriched in acidic residues.

The protein belongs to the CRWN family. Core component of the LINC complex which is composed of inner nuclear membrane SUN domain-containing proteins coupled to outer nuclear membrane WIP proteins, the nucleoskeletal CRWN/LINC proteins, and, possibly, KAKU4. As to expression, expressed at low levels in roots, leaves, flowers and flower stalks.

Its subcellular location is the nucleus membrane. The protein localises to the nucleus. It localises to the nucleoplasm. The protein resides in the cytoplasm. It is found in the nucleus lamina. Its function is as follows. Component of SUN-protein-containing multivariate complexes also called LINC complexes which link the nucleoskeleton and cytoskeleton by providing versatile outer nuclear membrane attachment sites for cytoskeletal filaments. Required for nucleus structure organization (e.g. size and shape). The polypeptide is Protein CROWDED NUCLEI 3 (Arabidopsis thaliana (Mouse-ear cress)).